The chain runs to 504 residues: MDYVNRNLDDKLLCGICGKYFSDDESLREHRRQRHMTCHMCLLCNRRIPENETLREHMKNKHNIWKLFICVCCNWSFGTEIYLKCHEECMKSTGRPGLLKPLAMPMTAPAREASALNTDPQNGSDDVPHSSPSPVPMIAENSIIQASSLKMEPIESADRSSASTSTPRTLVSGTPREKIPCGFCGKDFFHEGSLREHRRRFHMTGHTCLLCNRQIPENETVRDHMKSQHNIKKVYNCLCCNWTFLNQVHLISHKTCLKQTGKPCCRPGHMEPLAIPRTASIRQFFTLKTETQSGDDDSAAGSQLFSARLSCKSCGKFFYSERSLSKHHRQIHMSGHVCVLCNHQMPKTVTVQEHMEKEHNIRLVFNCRCCNWSFATRRCLMSHVECLKKAGDARNVKPVAIPRMAADSILQSLKESEAQEYPDFSAASTTSSGPASTLKTPRMDFKKNLKICTDAVQILVGNGLFSNEQLAQTETWVMIFSNANKLFHSMNSFGEPSVSRDIPM.

C2H2-type zinc fingers lie at residues 12 to 35 (LLCG…RQRH) and 39 to 62 (HMCL…KNKH). A C2H2-type 3; degenerate zinc finger spans residues 68–91 (FICVCCNWSFGTEIYLKCHEECMK). Disordered regions lie at residues 115-136 (ALNT…SPVP) and 154-173 (IESA…LVSG). A compositionally biased stretch (polar residues) spans 159–172 (RSSASTSTPRTLVS). 2 C2H2-type zinc fingers span residues 179–202 (IPCG…RRFH) and 206–229 (HTCL…KSQH). The C2H2-type 6; degenerate zinc finger occupies 235-258 (YNCLCCNWTFLNQVHLISHKTCLK). Residues 309-332 (LSCKSCGKFFYSERSLSKHHRQIH) form a C2H2-type 7 zinc finger. The C2H2-type 8; degenerate zinc finger occupies 365 to 389 (FNCRCCNWSFATRRCLMSHVECLKK).

In terms of tissue distribution, expressed in proximal gonad.

Functionally, possible transcriptional regulator. Involved in promoting segregation of chromosomes during meiosis, perhaps acting downstream of the let-60 RAS / mpk-1 MAPK signaling pathway. This is Paired zinc finger protein 1 from Caenorhabditis elegans.